Here is a 168-residue protein sequence, read N- to C-terminus: UPF0262 protein BRADO6636 (168 aa).

It belongs to the UPF0262 family.

The protein is UPF0262 protein BRADO6636 of Bradyrhizobium sp. (strain ORS 278).